A 258-amino-acid chain; its full sequence is C1q-related factor (258 aa).

Positions 1–16 are cleaved as a signal peptide; sequence MLLVLVVLIPVLVSSG. Residues 39–117 are disordered; the sequence is GPGAGARTDG…PGLPGAGGSG (79 aa). Residues 67–77 show a composition bias toward low complexity; that stretch reads GPQGKPGRTGK. In terms of domain architecture, Collagen-like spans 67–115; that stretch reads GPQGKPGRTGKPGPPGPPGDPGPPGPVGPPGEKGEPGKPGPPGLPGAGG. The segment covering 78–95 has biased composition (pro residues); that stretch reads PGPPGPPGDPGPPGPVGP. Positions 125-258 constitute a C1q domain; it reads TTVPRVAFYA…TFSGFIIYSD (134 aa).

Interacts with ADGRB3. Forms heterooligomers with C1QL4, when proteins are coexpressed; this interaction does not occur after secretion. As to expression, expressed in brainstem.

The protein resides in the secreted. Its function is as follows. May regulate the number of excitatory synapses that are formed on hippocampus neurons. Has no effect on inhibitory synapses. The sequence is that of C1q-related factor (C1QL1) from Homo sapiens (Human).